The sequence spans 118 residues: MLDSLKQKKNFKRIKMRIKTGDLVKVINGKEKGKTGEVLKTIPLENRVVVKGVNLRTKHVKPSQEGESGRILTEEASLHASNVMFFSKDKNLISKIEYFIDKEGVKKRRLKKTGELID.

Belongs to the universal ribosomal protein uL24 family. As to quaternary structure, part of the 50S ribosomal subunit.

One of two assembly initiator proteins, it binds directly to the 5'-end of the 23S rRNA, where it nucleates assembly of the 50S subunit. Its function is as follows. One of the proteins that surrounds the polypeptide exit tunnel on the outside of the subunit. The sequence is that of Large ribosomal subunit protein uL24 from Prochlorococcus marinus subsp. pastoris (strain CCMP1986 / NIES-2087 / MED4).